The primary structure comprises 388 residues: Protein SopA (388 aa).

Belongs to the ParA family.

Its function is as follows. This protein is essential for plasmid partition. It ensures the proper distribution of newly replicated plasmids to daughter cells during cell division. SopA is trans-acting. The polypeptide is Protein SopA (sopA) (Escherichia coli O157:H7).